The primary structure comprises 121 residues: Ribosome-binding factor A (121 aa).

Belongs to the RbfA family. Monomer. Binds 30S ribosomal subunits, but not 50S ribosomal subunits or 70S ribosomes.

Its subcellular location is the cytoplasm. Its function is as follows. One of several proteins that assist in the late maturation steps of the functional core of the 30S ribosomal subunit. Associates with free 30S ribosomal subunits (but not with 30S subunits that are part of 70S ribosomes or polysomes). Required for efficient processing of 16S rRNA. May interact with the 5'-terminal helix region of 16S rRNA. This chain is Ribosome-binding factor A, found in Heliobacterium modesticaldum (strain ATCC 51547 / Ice1).